The primary structure comprises 380 residues: 1-deoxy-D-xylulose 5-phosphate reductoisomerase (380 aa).

Residues T10, G11, S12, I13, G36, R37, N38, and N120 each coordinate NADPH. Residue K121 participates in 1-deoxy-D-xylulose 5-phosphate binding. Position 122 (E122) interacts with NADPH. Mn(2+) is bound at residue D146. 4 residues coordinate 1-deoxy-D-xylulose 5-phosphate: S147, E148, S172, and H195. Residue E148 coordinates Mn(2+). G201 lines the NADPH pocket. 4 residues coordinate 1-deoxy-D-xylulose 5-phosphate: S208, N213, K214, and E217. E217 is a binding site for Mn(2+).

This sequence belongs to the DXR family. The cofactor is Mg(2+). Requires Mn(2+) as cofactor.

It carries out the reaction 2-C-methyl-D-erythritol 4-phosphate + NADP(+) = 1-deoxy-D-xylulose 5-phosphate + NADPH + H(+). Its pathway is isoprenoid biosynthesis; isopentenyl diphosphate biosynthesis via DXP pathway; isopentenyl diphosphate from 1-deoxy-D-xylulose 5-phosphate: step 1/6. Catalyzes the NADPH-dependent rearrangement and reduction of 1-deoxy-D-xylulose-5-phosphate (DXP) to 2-C-methyl-D-erythritol 4-phosphate (MEP). This chain is 1-deoxy-D-xylulose 5-phosphate reductoisomerase, found in Listeria monocytogenes serotype 4b (strain F2365).